We begin with the raw amino-acid sequence, 70 residues long: U2-agatoxin-Ao1j (70 aa).

The signal sequence occupies residues 1-20 (MRAIISLLLISAMVFSMIAA). Residues 21–34 (VPEEEGLQLSEDER) constitute a propeptide that is removed on maturation. 3 disulfide bridges follow: Cys-37-Cys-53, Cys-44-Cys-58, and Cys-52-Cys-68. Leu-69 is subject to Leucine amide.

This sequence belongs to the neurotoxin 01 (U2-agtx) family. In terms of tissue distribution, expressed by the venom gland.

Its subcellular location is the secreted. In terms of biological role, insect active toxin causing rapid but reversible paralysis in crickets. No activity shown in mammals. Does not show effect on mammalian voltage-gated calcium channels. The polypeptide is U2-agatoxin-Ao1j (Agelena orientalis (Funnel-web spider)).